Consider the following 202-residue polypeptide: uncharacterized protein (202 aa).

Disordered stretches follow at residues 1–32 (MRPEGVSRGRASSVSISMCPPPPNGARRASLG) and 46–95 (PSSV…PSYT). Low complexity predominate over residues 47-79 (SSVSLSSSSSRRSMPSLGSSRSSSLPSTGSLRS).

This is an uncharacterized protein from Equus caballus (Horse).